A 262-amino-acid polypeptide reads, in one-letter code: Hemin import ATP-binding protein HmuV (262 aa).

One can recognise an ABC transporter domain in the interval 1–247 (MRNLTLQRGR…ERIKQIFAFD (247 aa)). 31–38 (GPNGTGKS) contributes to the ATP binding site.

This sequence belongs to the ABC transporter superfamily. Heme (hemin) importer (TC 3.A.1.14.5) family. In terms of assembly, the complex is composed of two ATP-binding proteins (HmuV), two transmembrane proteins (HmuU) and a solute-binding protein (HmuT).

Its subcellular location is the cell inner membrane. Its function is as follows. Part of the ABC transporter complex HmuTUV involved in hemin import. Responsible for energy coupling to the transport system. This chain is Hemin import ATP-binding protein HmuV, found in Plesiomonas shigelloides (Aeromonas shigelloides).